Reading from the N-terminus, the 112-residue chain is UPF0102 protein Spea_0251 (112 aa).

Belongs to the UPF0102 family.

The sequence is that of UPF0102 protein Spea_0251 from Shewanella pealeana (strain ATCC 700345 / ANG-SQ1).